Consider the following 106-residue polypeptide: Protein translation factor SUI1 homolog (106 aa).

It belongs to the SUI1 family.

The chain is Protein translation factor SUI1 homolog from Methanopyrus kandleri (strain AV19 / DSM 6324 / JCM 9639 / NBRC 100938).